A 211-amino-acid chain; its full sequence is MYQPDFPTVPFRLGLYPVVDSVAWIERLLEAGVRTIQLRIKDKRDEEVEADVIAAIALGRRYNARLFINDYWRLAIKHRAYGVHLGQEDLETTDLKAIQAAGLRLGVSTHNDMEIDVALAAKPSYIALGHVFPTQTKQMPSAPQGLAQLASHIERLADYPTVAIGGISLERAPAVLATGVGSIAVVSAITQAADWREATAELLAIAGVGDE.

Residues 37–41 and Asn69 each bind 4-amino-2-methyl-5-(diphosphooxymethyl)pyrimidine; that span reads QLRIK. 2 residues coordinate Mg(2+): Asp70 and Asp89. Ser108 serves as a coordination point for 4-amino-2-methyl-5-(diphosphooxymethyl)pyrimidine. 134 to 136 is a binding site for 2-[(2R,5Z)-2-carboxy-4-methylthiazol-5(2H)-ylidene]ethyl phosphate; the sequence is TQT. Residue Lys137 participates in 4-amino-2-methyl-5-(diphosphooxymethyl)pyrimidine binding. Residues Gly166 and 186 to 187 each bind 2-[(2R,5Z)-2-carboxy-4-methylthiazol-5(2H)-ylidene]ethyl phosphate; that span reads VS.

It belongs to the thiamine-phosphate synthase family. It depends on Mg(2+) as a cofactor.

The enzyme catalyses 2-[(2R,5Z)-2-carboxy-4-methylthiazol-5(2H)-ylidene]ethyl phosphate + 4-amino-2-methyl-5-(diphosphooxymethyl)pyrimidine + 2 H(+) = thiamine phosphate + CO2 + diphosphate. The catalysed reaction is 2-(2-carboxy-4-methylthiazol-5-yl)ethyl phosphate + 4-amino-2-methyl-5-(diphosphooxymethyl)pyrimidine + 2 H(+) = thiamine phosphate + CO2 + diphosphate. It catalyses the reaction 4-methyl-5-(2-phosphooxyethyl)-thiazole + 4-amino-2-methyl-5-(diphosphooxymethyl)pyrimidine + H(+) = thiamine phosphate + diphosphate. It participates in cofactor biosynthesis; thiamine diphosphate biosynthesis; thiamine phosphate from 4-amino-2-methyl-5-diphosphomethylpyrimidine and 4-methyl-5-(2-phosphoethyl)-thiazole: step 1/1. Condenses 4-methyl-5-(beta-hydroxyethyl)thiazole monophosphate (THZ-P) and 2-methyl-4-amino-5-hydroxymethyl pyrimidine pyrophosphate (HMP-PP) to form thiamine monophosphate (TMP). This chain is Thiamine-phosphate synthase, found in Salmonella paratyphi B (strain ATCC BAA-1250 / SPB7).